The following is a 346-amino-acid chain: Putative D-xylulose reductase (346 aa).

Residues cysteine 39, histidine 64, and glutamate 150 each coordinate Zn(2+).

It belongs to the zinc-containing alcohol dehydrogenase family. It depends on Zn(2+) as a cofactor.

It carries out the reaction xylitol + NAD(+) = D-xylulose + NADH + H(+). This is Putative D-xylulose reductase from Rhizobium meliloti (strain 1021) (Ensifer meliloti).